Consider the following 194-residue polypeptide: Outer membrane protein A (194 aa).

An N-terminal signal peptide occupies residues 1 to 24; that stretch reads MNKPSKFALALAFAAVTASGVASA. The chain crosses the membrane as a beta stranded span at residues 30–38; the sequence is WRNPYGNVW. The OmpA-like domain maps to 77–193; that stretch reads MAAKVVFNAD…RVEIEIVGSR (117 aa).

Belongs to the outer membrane OOP (TC 1.B.6) superfamily.

Its subcellular location is the cell outer membrane. Functionally, structural protein that may protect the integrity of the bacterium. The sequence is that of Outer membrane protein A from Bordetella avium.